A 639-amino-acid chain; its full sequence is Versicolorin B synthase stcN (639 aa).

A signal peptide spans 1-19 (MPAWSLLVLSALPVVGMFA). FAD contacts are provided by residues 77–78 (TA) and 98–99 (EA). Residue N109 is glycosylated (N-linked (GlcNAc...) asparagine). 164–167 (GAML) lines the FAD pocket. The N-linked (GlcNAc...) asparagine glycan is linked to N214. The PAS domain maps to 263–301 (GFSNGQLLGRSYITHTIHPKTRRRDTASTSYLQTALRTS). N-linked (GlcNAc...) asparagine glycosylation is found at N444 and N501. Residues A609 and 620–621 (PM) each bind FAD.

Belongs to the GMC oxidoreductase family. Homodimer. The cofactor is FAD.

Its subcellular location is the cytoplasm. The protein resides in the cytosol. The catalysed reaction is (2S-3S)-versiconal hemiacetal = versicolorin B + H2O. It catalyses the reaction (S)-5'-oxoaverantin + H(+) = (1'S,5'S)-averufin + H2O. The protein operates within mycotoxin biosynthesis; sterigmatocystin biosynthesis. Functionally, norsolorinic acid reductase; part of the gene cluster that mediates the biosynthesis of sterigmatocystin (ST), a polyketide-derived furanocoumarin which is part of the most toxic and carcinogenic compounds among the known mycotoxins. The first step in the biosynthesis of sterigmatocystin is the production of hexanoate by the fatty acid synthase (FAS) units stcJ and stcK. The polyketide backbone is assembled by the non-reducing polyketide synthase stcA by condensation of the starter hexanoyl-CoA and 7 malonyl-CoA extender units followed by cyclization and release of norsolorinic acid. Norsolorinic acid is the first stable intermediate in the biosynthesis of sterigmatocystin and is converted into averantin (AVN) by the ketoreductase stcE which reduces the hexanoate ketone to an alcohol. Averantin is then oxidized into 5'-hydroxyaverantin (HAVN) by the cytochrome P450 monooxygenase stcF. 5'-hydroxyaverantin is further converted to 5'-oxyaverantin (OAVN) by the 5'-hydroxyaverantin dehydrogenase stcG. The next step is the conversion of OAVN into averufin (AVF) which is catalyzed by a yet to be identified enzyme. The cytochrome P450 monooxygenase stcB and the flavin-binding monooxygenase stcW are both required for the conversion of averufin to 1-hydroxyversicolorone. The esterase stcI probably catalyzes the formation of versiconal hemiacetal acetate from 1-hydroxyversicolorone. The oxydoreductase stcN then probably catalyzes the biosynthetic step from versiconal to versicolorin B (VERB). The next step is performed by the versicolorin B desaturase stcL to produce versicolorin A (VERA). The ketoreductase stcU and the cytochrome P450 monooxygenase stcS are involved in the conversion of versicolorin A to demethylsterigmatocystin. The Baeyer-Villiger oxidas stcQ and the reductase stcR might be involved in the biosynthetic step from versicolorin A to demethylsterigmatocystin. The final step in the biosynthesis of sterigmatocystin is the methylation of demethylsterigmatocystin catalyzed by the methyltransferase stcP. The chain is Versicolorin B synthase stcN from Emericella nidulans (strain FGSC A4 / ATCC 38163 / CBS 112.46 / NRRL 194 / M139) (Aspergillus nidulans).